We begin with the raw amino-acid sequence, 227 residues long: Sperm-associated antigen 7 (227 aa).

Residues 1–45 (MADLLGSILSSMEKPPSLGDQESRRKAREQAARLKKLQEQDKQQK) are disordered. Ala-2 carries the post-translational modification N-acetylalanine. A compositionally biased stretch (basic and acidic residues) spans 21-45 (QESRRKAREQAARLKKLQEQDKQQK). Residues 35-51 (KKLQEQDKQQKVEFRKR) carry the Nuclear localization signal motif. The 64-residue stretch at 46–109 (VEFRKRMEKE…DCRYVMIFKK (64 aa)) folds into the R3H domain. Position 114 is a phosphoserine (Ser-114). A disordered region spans residues 118 to 161 (LDSYRHGEEWDPQKAEEKRKLKELAQKQEEEAAQQGPAVVSPAS). A compositionally biased stretch (basic and acidic residues) spans 119 to 147 (DSYRHGEEWDPQKAEEKRKLKELAQKQEE). The Nuclear localization signal motif lies at 122 to 139 (RHGEEWDPQKAEEKRKLK). Phosphoserine occurs at positions 158 and 202.

It is found in the nucleus. This chain is Sperm-associated antigen 7 (Spag7), found in Mus musculus (Mouse).